A 354-amino-acid polypeptide reads, in one-letter code: Ornithine transcarbamylase, mitochondrial (354 aa).

Residues 1–32 (MLSNLRILLNKAALRKAHTSMVRNFRYGKPVQ) constitute a mitochondrion transit peptide. The residue at position 70 (K70) is an N6-acetyllysine; alternate. Position 70 is an N6-succinyllysine; alternate (K70). Residue K80 is modified to N6-succinyllysine. K88 bears the N6-acetyllysine; alternate mark. The residue at position 88 (K88) is an N6-succinyllysine; alternate. 90 to 93 (STRT) lines the carbamoyl phosphate pocket. S133 bears the Phosphoserine mark. Position 141 (R141) interacts with carbamoyl phosphate. K144 bears the N6-acetyllysine; alternate mark. K144 bears the N6-succinyllysine; alternate mark. Residues H168 and Q171 each contribute to the carbamoyl phosphate site. Residue N199 coordinates L-ornithine. An N6-acetyllysine; alternate mark is found at K221, K231, and K238. N6-succinyllysine; alternate occurs at positions 221, 231, and 238. Residues D263, S267, and M268 each contribute to the L-ornithine site. An N6-succinyllysine mark is found at K274 and K289. Position 292 is an N6-acetyllysine; alternate (K292). K292 is subject to N6-succinyllysine; alternate. C303 serves as the catalytic Proton acceptor. A carbamoyl phosphate-binding site is contributed by 303 to 304 (CL). Position 307 is an N6-acetyllysine; alternate (K307). Residue K307 is modified to N6-succinyllysine; alternate. R330 contacts carbamoyl phosphate.

The protein belongs to the aspartate/ornithine carbamoyltransferase superfamily. OTCase family. In terms of assembly, homotrimer. Post-translationally, acetylation at Lys-88 negatively regulates ornithine carbamoyltransferase activity in response to nutrient signals.

It is found in the mitochondrion matrix. The catalysed reaction is carbamoyl phosphate + L-ornithine = L-citrulline + phosphate + H(+). It functions in the pathway nitrogen metabolism; urea cycle; L-citrulline from L-ornithine and carbamoyl phosphate: step 1/1. Its activity is regulated as follows. Negatively regulated by lysine acetylation. Functionally, catalyzes the second step of the urea cycle, the condensation of carbamoyl phosphate with L-ornithine to form L-citrulline. The urea cycle ensures the detoxification of ammonia by converting it to urea for excretion. The protein is Ornithine transcarbamylase, mitochondrial of Rattus norvegicus (Rat).